Here is a 438-residue protein sequence, read N- to C-terminus: GRAS family protein TF80 (438 aa).

Positions 13–436 constitute a GRAS domain; that stretch reads LRYDSHGSNP…RPLFSVSAWK (424 aa). Positions 20–81 are leucine repeat I (LRI); sequence SNPMIPLIEC…YKIVKHLPGV (62 aa). The interval 100 to 165 is VHIID; it reads QKYFYDLCPF…GGPPFLKITG (66 aa). Residues 131–135 carry the VHIID motif; it reads VHIID. The interval 175 to 207 is leucine repeat II (LRII); it reads QMSFHLTTEAGILDFPLQFNPIISKLEDVDFEN. The tract at residues 216-359 is PFYRE; it reads VAISSVLQLH…SMLLGEQIKN (144 aa). The short motif at 224 to 228 is the LXXLL motif element; that stretch reads LHSLL. Residues 362–436 form an SAW region; sequence TCEGVDRKER…RPLFSVSAWK (75 aa).

This sequence belongs to the GRAS family. Interacts with RAM1.

It localises to the nucleus. The protein is GRAS family protein TF80 (TF80) of Medicago truncatula (Barrel medic).